Consider the following 809-residue polypeptide: Quinate/shikimate dehydrogenase (quinone) (809 aa).

The next 5 helical transmembrane spans lie at 14-34 (VWCFILGLALLITGAFYVIGG), 41-61 (GGSWYFLIAGLMITTSAFFMF), 68-88 (VWLYALAFIGTVIWALIDAGF), 90-110 (FWPLHSRLMFPAGLFAAVMLT), and 127-147 (AYVIGGLTVLGMLGGLYGMFI).

The protein belongs to the bacterial PQQ dehydrogenase family. Pyrroloquinoline quinone serves as cofactor.

The protein resides in the cell membrane. The enzyme catalyses L-quinate + a quinone = 3-dehydroquinate + a quinol. It carries out the reaction shikimate + a quinone = 3-dehydroshikimate + a quinol. It participates in aromatic compound metabolism; 3,4-dihydroxybenzoate biosynthesis; 3-dehydroquinate from D-quinate (PQQ route): step 1/1. In terms of biological role, can act either on quinate or on shikimate. This chain is Quinate/shikimate dehydrogenase (quinone) (quiA), found in Acinetobacter baylyi (strain ATCC 33305 / BD413 / ADP1).